The chain runs to 213 residues: MAITQFRLFKFCTCLATVFSFLKRLICRSGRGRKLSGDQITLPTTVDYSSVPKQTDVEEWTSWDEDAPTSVKIEGGNGNVATQQNSLEQLEPDYFKDMTPTIRKTQKIVIKKREPLNFGIPDGSTGFSSRLAATQDLPFIHQSSELGDLDTWQENTNAWEEEEDAAWQAEEVLRQQKLADREKRAAEQQRKKMEKEAQRLMKKEQNKIGVKLS.

Topologically, residues methionine 1–phenylalanine 6 are extracellular. Residues arginine 7–cysteine 27 traverse the membrane as a helical; Signal-anchor for type III membrane protein segment. At arginine 28–serine 213 the chain is on the cytoplasmic side. Residue serine 36 is modified to Phosphoserine. Position 41 is a phosphothreonine (threonine 41). Position 94 is a phosphotyrosine (tyrosine 94). The stretch at glutamate 163–lysine 211 forms a coiled coil. A compositionally biased stretch (basic and acidic residues) spans leucine 178 to asparagine 206. Residues leucine 178–serine 213 form a disordered region.

As to quaternary structure, homodimer. As to expression, widely expressed. Expressed in ovary, testis, prostate, thymus, muscle and heart, but not in small intestine, colon, lymph nodes, or peripherical blood lymphocytes. The protein is not detected in any of the above organs.

The protein resides in the golgi apparatus membrane. Functionally, may participate in suppression of cell proliferation and induces apoptotic cell death through activation of interleukin-1-beta converting enzyme (ICE)-like proteases. The sequence is that of Receptor-binding cancer antigen expressed on SiSo cells (EBAG9) from Homo sapiens (Human).